We begin with the raw amino-acid sequence, 328 residues long: Formyltetrahydrofolate deformylase 2, mitochondrial (328 aa).

The transit peptide at 1–12 directs the protein to the mitochondrion; the sequence is MIRRVSTTSCLS. One can recognise an ACT domain in the interval 46–129; sequence FHVFHCPDVV…SVVRVPSLDP (84 aa). Asp272 is an active-site residue.

This sequence belongs to the PurU family. Expressed in leaves, cotyledons, roots, seeds and flowers.

It localises to the mitochondrion. It carries out the reaction (6R)-10-formyltetrahydrofolate + H2O = (6S)-5,6,7,8-tetrahydrofolate + formate + H(+). Deformylase involved in photorespiration. Prevents excessive accumulation of 5-formyl tetrahydrofolate (THF), a potent inhibitor of the Gly decarboxylase/Ser hydroxymethyltransferase complex. The polypeptide is Formyltetrahydrofolate deformylase 2, mitochondrial (PURU2) (Arabidopsis thaliana (Mouse-ear cress)).